The primary structure comprises 590 residues: DNA mismatch repair protein MutL (590 aa).

A compositionally biased stretch (polar residues) spans 335–351; sequence PLSSASPKLPESTTATA. A disordered region spans residues 335-354; the sequence is PLSSASPKLPESTTATAQPH.

This sequence belongs to the DNA mismatch repair MutL/HexB family.

Its function is as follows. This protein is involved in the repair of mismatches in DNA. It is required for dam-dependent methyl-directed DNA mismatch repair. May act as a 'molecular matchmaker', a protein that promotes the formation of a stable complex between two or more DNA-binding proteins in an ATP-dependent manner without itself being part of a final effector complex. In Dichelobacter nodosus (strain VCS1703A), this protein is DNA mismatch repair protein MutL.